The following is a 115-amino-acid chain: UPF0102 protein NMCC_2054 (115 aa).

The protein belongs to the UPF0102 family.

This chain is UPF0102 protein NMCC_2054, found in Neisseria meningitidis serogroup C (strain 053442).